Here is a 318-residue protein sequence, read N- to C-terminus: Aspartate carbamoyltransferase catalytic subunit (318 aa).

R55 and T56 together coordinate carbamoyl phosphate. K83 is a binding site for L-aspartate. Carbamoyl phosphate-binding residues include R105, H138, and Q141. L-aspartate is bound by residues R171 and R225. Carbamoyl phosphate contacts are provided by G266 and P267.

It belongs to the aspartate/ornithine carbamoyltransferase superfamily. ATCase family. In terms of assembly, heterododecamer (2C3:3R2) of six catalytic PyrB chains organized as two trimers (C3), and six regulatory PyrI chains organized as three dimers (R2).

The enzyme catalyses carbamoyl phosphate + L-aspartate = N-carbamoyl-L-aspartate + phosphate + H(+). The protein operates within pyrimidine metabolism; UMP biosynthesis via de novo pathway; (S)-dihydroorotate from bicarbonate: step 2/3. Functionally, catalyzes the condensation of carbamoyl phosphate and aspartate to form carbamoyl aspartate and inorganic phosphate, the committed step in the de novo pyrimidine nucleotide biosynthesis pathway. This Corynebacterium kroppenstedtii (strain DSM 44385 / JCM 11950 / CIP 105744 / CCUG 35717) protein is Aspartate carbamoyltransferase catalytic subunit.